The following is a 103-amino-acid chain: Floral defensin-like protein 1 (103 aa).

Positions 1–25 (MARSICFFAVAILALMLFAAYDAEA) are cleaved as a signal peptide. 5 cysteine pairs are disulfide-bonded: Cys28–Cys72, Cys32–Cys48, Cys39–Cys59, Cys45–Cys66, and Cys49–Cys68. Residues 73 to 103 (VFEKTEATQTETFTKDVNTLAEALLEADMMV) constitute a propeptide, removed in mature form.

It belongs to the DEFL family. In terms of processing, when compared to other plant defensins, the petunia defensins have an additional fifth disulfide bond. Petals.

Its subcellular location is the secreted. It is found in the vacuole. Functionally, plant defense peptide with antifungal activity against F.oxysporum and B.cinerea. The sequence is that of Floral defensin-like protein 1 (D1) from Petunia hybrida (Petunia).